The primary structure comprises 361 residues: Peptide chain release factor 1 (361 aa).

At Gln237 the chain carries N5-methylglutamine.

Belongs to the prokaryotic/mitochondrial release factor family. In terms of processing, methylated by PrmC. Methylation increases the termination efficiency of RF1.

It localises to the cytoplasm. Peptide chain release factor 1 directs the termination of translation in response to the peptide chain termination codons UAG and UAA. The chain is Peptide chain release factor 1 from Thioalkalivibrio sulfidiphilus (strain HL-EbGR7).